Reading from the N-terminus, the 261-residue chain is Small ribosomal subunit protein uS2 (261 aa).

Belongs to the universal ribosomal protein uS2 family.

The sequence is that of Small ribosomal subunit protein uS2 from Paracoccus denitrificans (strain Pd 1222).